Reading from the N-terminus, the 470-residue chain is Solute carrier family 7 member 13 (470 aa).

Residues 1 to 11 (MDRGEKIQLKR) are Cytoplasmic-facing. A helical membrane pass occupies residues 12–32 (VFGYWWGTSFLLINIIGAGIF). Residues 33-45 (VSPKGVLAYSCMN) are Extracellular-facing. A helical transmembrane segment spans residues 46–66 (VGVSLCVWAGCAILAMTSTLC). At 67 to 87 (SAEISISFPCSGAQYYFLKRY) the chain is on the cytoplasmic side. Residues 88–108 (FGSTVAFLNLWTSLFLGSGVV) traverse the membrane as a helical segment. The Extracellular segment spans residues 109–128 (AGQALLLAEYSIQPFFPSCS). A helical membrane pass occupies residues 129–149 (VPKLPKKCLALAMLWIVGILT). Residues 150–162 (SRGVKEVTWLQIA) are Cytoplasmic-facing. The helical transmembrane segment at 163-183 (SSVLKVSILSFISLTGVVFLI) threads the bilayer. Residues 184–206 (RGKKENVERFQNAFDAELPDISH) are Extracellular-facing. A helical transmembrane segment spans residues 207 to 227 (LIQAIFQGYFAYSGGACFTLI). Topologically, residues 228-240 (AGELKKPRTTIPK) are cytoplasmic. Residues 241 to 261 (CIFTALPLVTVVYLLVNISYL) form a helical membrane-spanning segment. The Extracellular segment spans residues 262–287 (TVLTPREILSSDAVAITWADRAFPSL). The helical transmembrane segment at 288-308 (AWIMPFAISTSLFSNLLISIF) threads the bilayer. At 309–336 (KSSRPIYLASQEGQLPLLFNTLNSHSSP) the chain is on the cytoplasmic side. Residues 337 to 357 (FTAVLLLVTLGSLAIILTSLI) form a helical membrane-spanning segment. Residue aspartate 358 is a topological domain, extracellular. The helical transmembrane segment at 359 to 379 (LINYIFFTGSLWSILLMIGIL) threads the bilayer. Residues 380 to 393 (RRRYQEPNLSIPYK) are Cytoplasmic-facing. Residues 394 to 414 (VFLSFPLATIVIDVGLVVIPL) traverse the membrane as a helical segment. Over 415 to 421 (VKSPNVH) the chain is Extracellular. A helical membrane pass occupies residues 422–442 (YVYVLLLVLSGLLFYIPLIHF). Over 443 to 470 (KIRLAWFEKMTCYLQLLFNICLPDVSEE) the chain is Cytoplasmic.

It belongs to the amino acid-polyamine-organocation (APC) superfamily. In terms of assembly, disulfide-linked heterodimer composed of the catalytic light subunit SLC7A13 and the heavy subunit SLC3A1. Expressed in the kidney.

Its subcellular location is the apical cell membrane. The enzyme catalyses L-cystine(out) + L-aspartate(in) = L-cystine(in) + L-aspartate(out). The catalysed reaction is L-cystine(out) = L-cystine(in). It carries out the reaction L-aspartate(in) + L-glutamate(out) = L-aspartate(out) + L-glutamate(in). It catalyses the reaction L-aspartate(in) + L-glutamine(out) = L-aspartate(out) + L-glutamine(in). The enzyme catalyses L-aspartate(in) + L-methionine(out) = L-aspartate(out) + L-methionine(in). The catalysed reaction is L-leucine(out) + L-aspartate(in) = L-leucine(in) + L-aspartate(out). It carries out the reaction L-valine(out) + L-aspartate(in) = L-valine(in) + L-aspartate(out). It catalyses the reaction L-aspartate(in) + L-phenylalanine(out) = L-aspartate(out) + L-phenylalanine(in). The enzyme catalyses L-tyrosine(out) + L-aspartate(in) = L-tyrosine(in) + L-aspartate(out). The catalysed reaction is L-tryptophan(out) + L-aspartate(in) = L-tryptophan(in) + L-aspartate(out). Functionally, associates with SLC3A1/rBAT to form a functional heterodimeric complex that transports anionic and neutral amino acids across the apical plasma membrane of renal epithelium. Preferentially mediates exchange transport, but can also operate via facilitated diffusion. May act as a major transporter for L-cystine in late proximal tubules, ensuring its reabsorption from the luminal fluid in exchange for cytosolic L-glutamate or L-aspartate. The polypeptide is Solute carrier family 7 member 13 (SLC7A13) (Homo sapiens (Human)).